Reading from the N-terminus, the 464-residue chain is ATP synthase subunit beta (464 aa).

153 to 160 (GGAGVGKT) is an ATP binding site.

Belongs to the ATPase alpha/beta chains family. In terms of assembly, F-type ATPases have 2 components, CF(1) - the catalytic core - and CF(0) - the membrane proton channel. CF(1) has five subunits: alpha(3), beta(3), gamma(1), delta(1), epsilon(1). CF(0) has three main subunits: a(1), b(2) and c(9-12). The alpha and beta chains form an alternating ring which encloses part of the gamma chain. CF(1) is attached to CF(0) by a central stalk formed by the gamma and epsilon chains, while a peripheral stalk is formed by the delta and b chains.

Its subcellular location is the cell inner membrane. It catalyses the reaction ATP + H2O + 4 H(+)(in) = ADP + phosphate + 5 H(+)(out). Functionally, produces ATP from ADP in the presence of a proton gradient across the membrane. The catalytic sites are hosted primarily by the beta subunits. In Burkholderia ambifaria (strain MC40-6), this protein is ATP synthase subunit beta.